The sequence spans 367 residues: Cyclic AMP-responsive element-binding protein 3-like protein 4 (367 aa).

A required for transcriptional activation region spans residues 1 to 52 (MELGCPELLEPPEDIFSTGSFLELGFNGPPSKVPGLQKSESDDFLNLFIDPN). Residues 1-267 (MELGCPELLE…QTSSRAAQTS (267 aa)) are Cytoplasmic-facing. The disordered stretch occupies residues 58–81 (ETSPGSDSGVSEDPGSPAPQAPSS). Residues 189–252 (ILKKIRRKIR…ISLVAQVHQL (64 aa)) form the bZIP domain. The segment at 191 to 230 (KKIRRKIRNKQSAQDSRRRKKEYIDGLESRVAACSEQNQK) is basic motif. A leucine-zipper region spans residues 231 to 252 (LQRKVQELERQNISLVAQVHQL). A helical; Signal-anchor for type II membrane protein transmembrane segment spans residues 268-288 (TCVLILLFSLALIILPSFSPF). At 289-367 (QSQPEARSEG…IRGMVHADEM (79 aa)) the chain is on the lumenal side. N338 carries an N-linked (GlcNAc...) asparagine glycan.

This sequence belongs to the bZIP family. ATF subfamily. Binds DNA as a dimer. Forms a heterodimer with CREM isoform Delta. In terms of processing, controlled by regulated intramembrane proteolysis (RIP). Following ER stress a fragment containing the cytoplasmic transcription factor domain is released by proteolysis. The cleavage seems to be performed sequentially by site-1 and site-2 proteases (PS1 and PS2). PS1 cleavage may be suppressed by a determinant in the C-terminal region.

The protein resides in the endoplasmic reticulum membrane. Its subcellular location is the nucleus. Functionally, transcriptional activator that may play a role in the unfolded protein response. Binds to the UPR element (UPRE) but not to CRE element. Preferentially binds DNA with to the consensus sequence 5'-T[GT]ACGT[GA][GT]-3' and has transcriptional activation activity from UPRE. Binds to NF-kappa-B site and has transcriptional activation activity from NF-kappa-B-containing regulatory elements. Increases the binding of CREM isoform Delta with CRE. The CREM isoform Delta-CREB3L4 heterodimer functions through CRE but not through UPRE and may recruit HIRA to CRE to regulate histone exchange. This is Cyclic AMP-responsive element-binding protein 3-like protein 4 (Creb3l4) from Rattus norvegicus (Rat).